Here is a 258-residue protein sequence, read N- to C-terminus: uncharacterized protein (258 aa).

Transmembrane regions (helical) follow at residues 38–58, 72–92, and 111–131; these read VFGL…LFIA, ALIF…IIFI, and FLVI…MLWW.

It localises to the cell membrane. This is an uncharacterized protein from Mycoplasma pneumoniae (strain ATCC 29342 / M129 / Subtype 1) (Mycoplasmoides pneumoniae).